The chain runs to 154 residues: Myoglobin (154 aa).

Residues 2–148 (GLSDGEWQLV…FRKDIAAKYK (147 aa)) form the Globin domain. S4 carries the phosphoserine modification. Residue H65 coordinates nitrite. An O2-binding site is contributed by H65. The residue at position 68 (T68) is a Phosphothreonine. H94 is a heme b binding site.

Belongs to the globin family. In terms of assembly, monomeric.

The protein resides in the cytoplasm. Its subcellular location is the sarcoplasm. The enzyme catalyses Fe(III)-heme b-[protein] + nitric oxide + H2O = Fe(II)-heme b-[protein] + nitrite + 2 H(+). The catalysed reaction is H2O2 + AH2 = A + 2 H2O. Its function is as follows. Monomeric heme protein which primary function is to store oxygen and facilitate its diffusion within muscle tissues. Reversibly binds oxygen through a pentacoordinated heme iron and enables its timely and efficient release as needed during periods of heightened demand. Depending on the oxidative conditions of tissues and cells, and in addition to its ability to bind oxygen, it also has a nitrite reductase activity whereby it regulates the production of bioactive nitric oxide. Under stress conditions, like hypoxia and anoxia, it also protects cells against reactive oxygen species thanks to its pseudoperoxidase activity. The chain is Myoglobin (MB) from Peponocephala electra (Melon-headed whale).